The following is a 449-amino-acid chain: Sulfite exporter TauE/SafE family protein 5 (449 aa).

12 consecutive transmembrane segments (helical) span residues 1–21 (MKTL…NANQ), 57–77 (AIIM…AGGI), 78–98 (GGGG…LKTA), 101–121 (FSAF…LFGG), 127–147 (YDLA…GVIC), 150–170 (VLPE…SSLK), 224–244 (IPWT…VIYL), 259–279 (PCGV…LIFT), 315–335 (AMSF…GMLI), 353–373 (TSFM…LLGM), 378–398 (TAYV…VLVQ), and 409–429 (IIVF…TSFG).

Belongs to the 4-toluene sulfonate uptake permease (TSUP) (TC 2.A.102) family.

It is found in the membrane. In Arabidopsis thaliana (Mouse-ear cress), this protein is Sulfite exporter TauE/SafE family protein 5.